The following is a 166-amino-acid chain: Large ribosomal subunit protein mL49 (166 aa).

The disordered stretch occupies residues 56 to 78 (RIPDPPKHEHYPTPSGWQPPRDP).

The protein belongs to the mitochondrion-specific ribosomal protein mL49 family. Component of the mitochondrial large ribosomal subunit (mt-LSU). Mature mammalian 55S mitochondrial ribosomes consist of a small (28S) and a large (39S) subunit. The 28S small subunit contains a 12S ribosomal RNA (12S mt-rRNA) and 30 different proteins. The 39S large subunit contains a 16S rRNA (16S mt-rRNA), a copy of mitochondrial valine transfer RNA (mt-tRNA(Val)), which plays an integral structural role, and 52 different proteins. Interacts with OXA1L. As to expression, ubiquitous.

Its subcellular location is the mitochondrion. In Homo sapiens (Human), this protein is Large ribosomal subunit protein mL49 (MRPL49).